Reading from the N-terminus, the 303-residue chain is Probable serine/threonine-protein kinase FPV212 (303 aa).

A Protein kinase domain is found at tryptophan 25 to leucine 303. ATP is bound by residues leucine 31–valine 39 and lysine 54. Aspartate 160 serves as the catalytic Proton acceptor.

Belongs to the protein kinase superfamily. Ser/Thr protein kinase family. Poxviruses subfamily.

It catalyses the reaction L-seryl-[protein] + ATP = O-phospho-L-seryl-[protein] + ADP + H(+). The catalysed reaction is L-threonyl-[protein] + ATP = O-phospho-L-threonyl-[protein] + ADP + H(+). This chain is Probable serine/threonine-protein kinase FPV212, found in Vertebrata (FPV).